A 331-amino-acid chain; its full sequence is Ferredoxin--NADP reductase (331 aa).

Residues T20, E39, Q47, Y52, V92, F126, D287, and S328 each coordinate FAD.

It belongs to the ferredoxin--NADP reductase type 2 family. In terms of assembly, homodimer. FAD is required as a cofactor.

The catalysed reaction is 2 reduced [2Fe-2S]-[ferredoxin] + NADP(+) + H(+) = 2 oxidized [2Fe-2S]-[ferredoxin] + NADPH. This Bacillus cereus (strain ZK / E33L) protein is Ferredoxin--NADP reductase.